The chain runs to 127 residues: Glycine cleavage system H protein (127 aa).

A Lipoyl-binding domain is found at 22–104; sequence KVRIGITDFA…YEKAWMIVIE (83 aa). K63 carries the post-translational modification N6-lipoyllysine.

It belongs to the GcvH family. In terms of assembly, the glycine cleavage system is composed of four proteins: P, T, L and H. (R)-lipoate serves as cofactor.

Its function is as follows. The glycine cleavage system catalyzes the degradation of glycine. The H protein shuttles the methylamine group of glycine from the P protein to the T protein. Is also involved in protein lipoylation via its role as an octanoyl/lipoyl carrier protein intermediate. This is Glycine cleavage system H protein from Geobacillus thermodenitrificans (strain NG80-2).